We begin with the raw amino-acid sequence, 203 residues long: Putative archaetidylserine decarboxylase proenzyme (203 aa).

The active-site Schiff-base intermediate with substrate; via pyruvic acid is Ser171. Position 171 is a pyruvic acid (Ser); by autocatalysis (Ser171).

It belongs to the phosphatidylserine decarboxylase family. PSD-A subfamily. Heterodimer of a large membrane-associated beta subunit and a small pyruvoyl-containing alpha subunit. Pyruvate serves as cofactor. Is synthesized initially as an inactive proenzyme. Formation of the active enzyme involves a self-maturation process in which the active site pyruvoyl group is generated from an internal serine residue via an autocatalytic post-translational modification. Two non-identical subunits are generated from the proenzyme in this reaction, and the pyruvate is formed at the N-terminus of the alpha chain, which is derived from the carboxyl end of the proenzyme. The post-translation cleavage follows an unusual pathway, termed non-hydrolytic serinolysis, in which the side chain hydroxyl group of the serine supplies its oxygen atom to form the C-terminus of the beta chain, while the remainder of the serine residue undergoes an oxidative deamination to produce ammonia and the pyruvoyl prosthetic group on the alpha chain.

The protein localises to the cell membrane. The catalysed reaction is archaetidylserine + H(+) = archaetidylethanolamine + CO2. Its function is as follows. Catalyzes the formation of archaetidylethanolamine (PtdEtn) from archaetidylserine (PtdSer). The chain is Putative archaetidylserine decarboxylase proenzyme from Methanosarcina barkeri (strain Fusaro / DSM 804).